The primary structure comprises 116 residues: Phosphoribosyl-AMP cyclohydrolase (116 aa).

Mg(2+) is bound at residue aspartate 85. Residue cysteine 86 participates in Zn(2+) binding. The Mg(2+) site is built by aspartate 87 and aspartate 89. Residues cysteine 102 and cysteine 109 each coordinate Zn(2+).

It belongs to the PRA-CH family. In terms of assembly, homodimer. Mg(2+) serves as cofactor. It depends on Zn(2+) as a cofactor.

Its subcellular location is the cytoplasm. It catalyses the reaction 1-(5-phospho-beta-D-ribosyl)-5'-AMP + H2O = 1-(5-phospho-beta-D-ribosyl)-5-[(5-phospho-beta-D-ribosylamino)methylideneamino]imidazole-4-carboxamide. It participates in amino-acid biosynthesis; L-histidine biosynthesis; L-histidine from 5-phospho-alpha-D-ribose 1-diphosphate: step 3/9. In terms of biological role, catalyzes the hydrolysis of the adenine ring of phosphoribosyl-AMP. In Thermobifida fusca (strain YX), this protein is Phosphoribosyl-AMP cyclohydrolase.